The primary structure comprises 151 residues: Ribosome maturation factor RimP (151 aa).

This sequence belongs to the RimP family.

The protein localises to the cytoplasm. In terms of biological role, required for maturation of 30S ribosomal subunits. The polypeptide is Ribosome maturation factor RimP (Persephonella marina (strain DSM 14350 / EX-H1)).